We begin with the raw amino-acid sequence, 358 residues long: DNA replication and repair protein RecF (358 aa).

An ATP-binding site is contributed by 30-37 (GANGSGKT).

This sequence belongs to the RecF family.

Its subcellular location is the cytoplasm. The RecF protein is involved in DNA metabolism; it is required for DNA replication and normal SOS inducibility. RecF binds preferentially to single-stranded, linear DNA. It also seems to bind ATP. The chain is DNA replication and repair protein RecF from Acinetobacter baylyi (strain ATCC 33305 / BD413 / ADP1).